A 457-amino-acid chain; its full sequence is Secreted effector kinase SteC (457 aa).

An ATP-binding site is contributed by Lys256.

This sequence belongs to the protein kinase superfamily. Autophosphorylated.

The protein resides in the secreted. Its subcellular location is the host cytoplasm. Functionally, effector proteins function to alter host cell physiology and promote bacterial survival in host tissues. This protein is a kinase, which is required for SPI-2 T3SS-dependent F-actin meshwork formation in infected host cells. The chain is Secreted effector kinase SteC (steC) from Salmonella typhimurium (strain LT2 / SGSC1412 / ATCC 700720).